A 468-amino-acid chain; its full sequence is Mothers against decapentaplegic homolog 1 (468 aa).

M1 is subject to N-acetylmethionine. The MH1 domain maps to 12-136 (PAVKRLLGWK…YKRVESPVLP (125 aa)). Zn(2+) is bound by residues C64, C109, C121, and H126. The tract at residues 162–246 (NEPHMPLNAT…DGSQPMDTNM (85 aa)) is disordered. Residues 188 to 210 (PNSSYPNSPGSSSSTYPHSPTSS) are compositionally biased toward low complexity. Residues 221 to 232 (DTPPPAYLPPED) show a composition bias toward pro residues. Polar residues predominate over residues 237 to 246 (DGSQPMDTNM). The region spanning 274–468 (WCSIVYYELN…SPHNPISSVS (195 aa)) is the MH2 domain. T325 is modified (phosphothreonine; by MINK1, TNIK and MAP4K4). The L3 loop stretch occupies residues 421–431 (KGWGAEYHRQD). Phosphoserine is present on residues S466 and S468.

It belongs to the dwarfin/SMAD family. As to quaternary structure, found in a complex with SMAD4 and YY1. Interacts with HGS, NANOG and ZCCHC12. Upon C-terminus phosphorylation: forms trimers with another SMAD1 and the co-SMAD SMAD4. Interacts with PEBP2-alpha subunit, CREB-binding protein (CBP), p300, SMURF1, SMURF2, USP15 and HOXC8. Associates with ZNF423 or ZNF521 in response to BMP2 leading to activate transcription of BMP target genes. Interacts with SKOR1. Interacts (via MH2 domain) with LEMD3. Binding to LEMD3 results in at least a partial reduction of receptor-mediated phosphorylation. Forms a ternary complex with PSMB4 and OAZ1 before PSMB4 is incorporated into the 20S proteasome. Interacts (via MH2 domain) with FAM83G (via MH2 domain); in a SMAD4-independent manner. Interacts with ZC3H3. Interacts with TMEM119. Interacts (via MH1 and MH2 domains) with ZNF8. Interacts with RANBP3L; the interaction increases when SMAD1 is not phosphorylated and mediates SMAD1 nuclear export. Interacts with EGR1; this interaction inhibits SMAD1 dephosphorylation. Interacts with SMAD6. Interacts with YAP1. Interacts with MTMR4; negatively regulates BMP signaling through SMAD1 dephosphorylation and retention in endosomes. Phosphorylation of the C-terminal SVS motif by BMP type 1 receptor kinase activates SMAD1 by promoting dissociation from the receptor and trimerization with SMAD4. Phosphorylation by ERK2 MAP kinase in response to EGF or HGF prevents SMAD1 nuclear accumulation and transcriptional activity in response to BMP. Dephosphorylation, probably by PPM1A, induces its export from the nucleus to the cytoplasm. Dephosphorylation is inhibited by association with EGR1. Phosphorylation by CDK8/9 creates binding sites for YAP1, and subsequent phosphorylation by GSK3 switches off YAP1 binding and adds binding sites for SMURF1. In terms of processing, ubiquitinated by SMAD-specific E3 ubiquitin ligase SMURF1, leading to its degradation. Monoubiquitinated, leading to prevent DNA-binding. Deubiquitination by USP15 alleviates inhibition and promotes activation of TGF-beta target genes. Dephosphorylation, probably by PPM1A, induces its export from the nucleus to the cytoplasm. Phospho-SMAD1 is ubiquitinated by CHIP leading to disruption of the SMAD1-SMAD4 complex. Ubiquitous; present in liver, lung, stomach and spleen with lower level in heart, testes and skeletal muscle.

It is found in the cytoplasm. The protein resides in the nucleus. Functionally, transcriptional modulator that plays a role in various cellular processes, including embryonic development, cell differentiation, and tissue homeostasis. Upon BMP ligand binding to their receptors at the cell surface, is phosphorylated by activated type I BMP receptors (BMPRIs) and associates with SMAD4 to form an heteromeric complex which translocates into the nucleus acting as transcription factor. In turn, the hetero-trimeric complex recognizes cis-regulatory elements containing Smad Binding Elements (SBEs) to modulate the outcome of the signaling network. SMAD1/OAZ1/PSMB4 complex mediates the degradation of the CREBBP/EP300 repressor SNIP1. Positively regulates BMP4-induced expression of odontogenic development regulator MSX1 following IPO7-mediated nuclear import. This chain is Mothers against decapentaplegic homolog 1 (Smad1), found in Rattus norvegicus (Rat).